Here is a 227-residue protein sequence, read N- to C-terminus: Enolase-phosphatase E1 (227 aa).

It belongs to the HAD-like hydrolase superfamily. MasA/MtnC family. In terms of assembly, monomer. Mg(2+) is required as a cofactor.

It carries out the reaction 5-methylsulfanyl-2,3-dioxopentyl phosphate + H2O = 1,2-dihydroxy-5-(methylsulfanyl)pent-1-en-3-one + phosphate. Its pathway is amino-acid biosynthesis; L-methionine biosynthesis via salvage pathway; L-methionine from S-methyl-5-thio-alpha-D-ribose 1-phosphate: step 3/6. It participates in amino-acid biosynthesis; L-methionine biosynthesis via salvage pathway; L-methionine from S-methyl-5-thio-alpha-D-ribose 1-phosphate: step 4/6. Bifunctional enzyme that catalyzes the enolization of 2,3-diketo-5-methylthiopentyl-1-phosphate (DK-MTP-1-P) into the intermediate 2-hydroxy-3-keto-5-methylthiopentenyl-1-phosphate (HK-MTPenyl-1-P), which is then dephosphorylated to form the acireductone 1,2-dihydroxy-3-keto-5-methylthiopentene (DHK-MTPene). This is Enolase-phosphatase E1 from Persephonella marina (strain DSM 14350 / EX-H1).